The following is a 207-amino-acid chain: Small ribosomal subunit protein uS4c (207 aa).

The S4 RNA-binding domain occupies 92–153 (MRLDNILFRL…PKIYQSIITK (62 aa)).

It belongs to the universal ribosomal protein uS4 family. As to quaternary structure, part of the 30S ribosomal subunit. Contacts protein S5. The interaction surface between S4 and S5 is involved in control of translational fidelity.

It is found in the plastid. It localises to the chloroplast. In terms of biological role, one of the primary rRNA binding proteins, it binds directly to 16S rRNA where it nucleates assembly of the body of the 30S subunit. Its function is as follows. With S5 and S12 plays an important role in translational accuracy. This is Small ribosomal subunit protein uS4c (rps4) from Equisetum bogotense (Horsetail).